Consider the following 472-residue polypeptide: Aspartyl/glutamyl-tRNA(Asn/Gln) amidotransferase subunit B (472 aa).

It belongs to the GatB/GatE family. GatB subfamily. In terms of assembly, heterotrimer of A, B and C subunits.

It catalyses the reaction L-glutamyl-tRNA(Gln) + L-glutamine + ATP + H2O = L-glutaminyl-tRNA(Gln) + L-glutamate + ADP + phosphate + H(+). It carries out the reaction L-aspartyl-tRNA(Asn) + L-glutamine + ATP + H2O = L-asparaginyl-tRNA(Asn) + L-glutamate + ADP + phosphate + 2 H(+). Its function is as follows. Allows the formation of correctly charged Asn-tRNA(Asn) or Gln-tRNA(Gln) through the transamidation of misacylated Asp-tRNA(Asn) or Glu-tRNA(Gln) in organisms which lack either or both of asparaginyl-tRNA or glutaminyl-tRNA synthetases. The reaction takes place in the presence of glutamine and ATP through an activated phospho-Asp-tRNA(Asn) or phospho-Glu-tRNA(Gln). The chain is Aspartyl/glutamyl-tRNA(Asn/Gln) amidotransferase subunit B from Campylobacter jejuni subsp. jejuni serotype O:2 (strain ATCC 700819 / NCTC 11168).